We begin with the raw amino-acid sequence, 454 residues long: Pup--protein ligase (454 aa).

Residue Glu-9 coordinates Mg(2+). Arg-53 contacts ATP. Mg(2+) is bound at residue Tyr-55. The active-site Proton acceptor is Asp-57. A Mg(2+)-binding site is contributed by Glu-63. ATP-binding residues include Thr-66 and Trp-420.

The protein belongs to the Pup ligase/Pup deamidase family. Pup-conjugating enzyme subfamily.

It catalyses the reaction ATP + [prokaryotic ubiquitin-like protein]-L-glutamate + [protein]-L-lysine = ADP + phosphate + N(6)-([prokaryotic ubiquitin-like protein]-gamma-L-glutamyl)-[protein]-L-lysine.. Its pathway is protein degradation; proteasomal Pup-dependent pathway. It participates in protein modification; protein pupylation. In terms of biological role, catalyzes the covalent attachment of the prokaryotic ubiquitin-like protein modifier Pup to the proteasomal substrate proteins, thereby targeting them for proteasomal degradation. This tagging system is termed pupylation. The ligation reaction involves the side-chain carboxylate of the C-terminal glutamate of Pup and the side-chain amino group of a substrate lysine. The polypeptide is Pup--protein ligase (Paenarthrobacter aurescens (strain TC1)).